The primary structure comprises 534 residues: METQNQIETLRYIFNQLNNQDKPQIIWFSGEGEDEKINFLIRLDNYFQPTFVQDLTINFLPAFVKRNKKNPPNTLAKGNFVNIANKLLAVLARSLSWKQLNKPQQKWLLWLLVPFLLLRQLWLKKKVSKIFQFVNERGILSFIKEQWPILTTLVTVGTTLGTPIFSITISQQKAILENAGHGAFVFLVIFSVFAIALGLVSSLIFLVSSLFSIRQKKSLQQLHQILSRLINKYFCFANSEQNQTGRYQLKNTGVCFFYGFDFEEKEYITQAMNLLLLLKQTNCFVLVGCKESNMLLIKNKVEPDINLKQSSLYLDLKSQISPLAQISKYNLLFEELALDADMFYLEDFFALLKTPRQIVNFLFRIKQNLKEFHQPQTLWFDYLALWALVIATDFEFNNVLWSFNDYLSLTNKQKEDYASVNLTAFFNRSLKNHKDNSLLFKPELFNTHAYIPETYTQVTLENIDSDKRAQLVPLNWFSQQKFSDFIEEKINFWQTQQAENKVFYLTLGERIFFLVLVNKKFKQIKLEAALKYLN.

2 helical membrane passes run 149 to 169 (ILTT…SITI) and 185 to 205 (VFLV…SLIF).

Its subcellular location is the cell membrane. This is an uncharacterized protein from Mycoplasma pneumoniae (strain ATCC 29342 / M129 / Subtype 1) (Mycoplasmoides pneumoniae).